Here is an 85-residue protein sequence, read N- to C-terminus: Toxin BmKT (85 aa).

The first 19 residues, 1–19, serve as a signal peptide directing secretion; the sequence is MNYLVFFSLALLLMTGVES. Residues 21 to 83 form the LCN-type CS-alpha/beta domain; that stretch reads RDGYIADDKN…VPIRVPGKCN (63 aa). Intrachain disulfides connect Cys-31/Cys-82, Cys-35/Cys-55, Cys-41/Cys-65, and Cys-45/Cys-67.

It belongs to the long (4 C-C) scorpion toxin superfamily. Sodium channel inhibitor family. Alpha subfamily. In terms of tissue distribution, expressed by the venom gland.

Its subcellular location is the secreted. Binds to sodium channels (Nav) and inhibits the inactivation of the activated channels, thereby blocking neuronal transmission. Tested on mice, has antitumor effect and strong inhibitory effect on pain. The protein is Toxin BmKT of Olivierus martensii (Manchurian scorpion).